A 268-amino-acid chain; its full sequence is Undecaprenyl-diphosphatase (268 aa).

The next 7 membrane-spanning stretches (helical) occupy residues Phe47–Leu67, Phe83–Gly103, Leu109–Val129, Phe144–Val164, Ala184–Leu204, Ile217–Phe237, and Leu248–Leu268.

This sequence belongs to the UppP family.

Its subcellular location is the cell inner membrane. The catalysed reaction is di-trans,octa-cis-undecaprenyl diphosphate + H2O = di-trans,octa-cis-undecaprenyl phosphate + phosphate + H(+). Catalyzes the dephosphorylation of undecaprenyl diphosphate (UPP). Confers resistance to bacitracin. The chain is Undecaprenyl-diphosphatase from Rhodopseudomonas palustris (strain ATCC BAA-98 / CGA009).